The following is a 364-amino-acid chain: Phosphoserine aminotransferase (364 aa).

Position 46 (Arg-46) interacts with L-glutamate. Pyridoxal 5'-phosphate is bound by residues 80-81 (AR), Trp-106, Thr-157, Asp-176, and Gln-199. Lys-200 carries the N6-(pyridoxal phosphate)lysine modification. 241–242 (NT) contributes to the pyridoxal 5'-phosphate binding site.

This sequence belongs to the class-V pyridoxal-phosphate-dependent aminotransferase family. SerC subfamily. In terms of assembly, homodimer. It depends on pyridoxal 5'-phosphate as a cofactor.

The protein localises to the cytoplasm. The enzyme catalyses O-phospho-L-serine + 2-oxoglutarate = 3-phosphooxypyruvate + L-glutamate. The catalysed reaction is 4-(phosphooxy)-L-threonine + 2-oxoglutarate = (R)-3-hydroxy-2-oxo-4-phosphooxybutanoate + L-glutamate. It functions in the pathway amino-acid biosynthesis; L-serine biosynthesis; L-serine from 3-phospho-D-glycerate: step 2/3. The protein operates within cofactor biosynthesis; pyridoxine 5'-phosphate biosynthesis; pyridoxine 5'-phosphate from D-erythrose 4-phosphate: step 3/5. Its function is as follows. Catalyzes the reversible conversion of 3-phosphohydroxypyruvate to phosphoserine and of 3-hydroxy-2-oxo-4-phosphonooxybutanoate to phosphohydroxythreonine. This chain is Phosphoserine aminotransferase, found in Vibrio parahaemolyticus serotype O3:K6 (strain RIMD 2210633).